Reading from the N-terminus, the 317-residue chain is Neurogenic differentiation factor 6-B (317 aa).

2 disordered regions span residues 1 to 90 and 297 to 317; these read MLTV…ERSR and DLHPRSQSFQSQDELNTGYHN. The segment covering 37–56 has biased composition (acidic residues); the sequence is EAEDDNTDREEEEEREEDEN. The span at 59–69 shows a compositional bias: basic residues; it reads PKKKGPRKKKS. Residues 65 to 70 carry the Nuclear localization signal motif; that stretch reads RKKKSE. Positions 70-90 are enriched in basic and acidic residues; that stretch reads EGRGDRVKMRRQEANARERSR. A bHLH domain is found at 78–130; it reads MRRQEANARERSRMHGLNDALESLRKVVPCYSKTQKLSKIETLRLAKNYIWAL. Residues 301–317 are compositionally biased toward polar residues; that stretch reads RSQSFQSQDELNTGYHN.

In terms of assembly, efficient DNA binding requires dimerization with another bHLH protein. As to expression, embryonic olfactory bulbs and olfactory placodes. In adult, expressed in brain and eye.

Its subcellular location is the nucleus. In terms of biological role, differentiation factor required for neurogenesis. Does not act as an upstream activator of isl1. In Danio rerio (Zebrafish), this protein is Neurogenic differentiation factor 6-B.